The chain runs to 415 residues: ATP-dependent RNA helicase RhlB (415 aa).

A Q motif motif is present at residues 9–37 (QRFSALPLHPIVRGALAKKGFDFCTPIQA). Positions 40–218 (LPISLNGRDV…FEDMNDPEYI (179 aa)) constitute a Helicase ATP-binding domain. 53-60 (AQTGTGKT) is an ATP binding site. Positions 164-167 (DEAD) match the DEAD box motif. The 149-residue stretch at 241-389 (DKMALLLTLM…VSQYETEALL (149 aa)) folds into the Helicase C-terminal domain.

This sequence belongs to the DEAD box helicase family. RhlB subfamily. As to quaternary structure, component of the RNA degradosome, which is a multiprotein complex involved in RNA processing and mRNA degradation.

It localises to the cytoplasm. It catalyses the reaction ATP + H2O = ADP + phosphate + H(+). In terms of biological role, DEAD-box RNA helicase involved in RNA degradation. Has RNA-dependent ATPase activity and unwinds double-stranded RNA. The protein is ATP-dependent RNA helicase RhlB of Haemophilus influenzae (strain PittGG).